The primary structure comprises 321 residues: Beta-porphyranase B (321 aa).

The signal sequence occupies residues 1–20 (MRKTVLYLSAASLFLSSYTL). The GH16 domain occupies 31–319 (EHIKNLPEAP…WVRAYKLVPI (289 aa)). Positions 72, 76, 173, 178, and 284 each coordinate substrate. The active-site Nucleophile is the E173. E178 acts as the Proton donor in catalysis.

It belongs to the glycosyl hydrolase 16 family.

It carries out the reaction Hydrolysis of beta-D-galactopyranose-(1-&gt;4)-alpha-L-galactopyranose-6-sulfate linkages in porphyran.. Cleaves the sulfated polysaccharide porphyran at the (1-&gt;4) linkages between beta-D-galactopyranose and alpha-L-galactopyranose-6-sulfate, forming mostly the disaccharide alpha-L-galactopyranose-6-sulfate-(1-&gt;3)-beta-D-galactose. Some longer oligosaccharides of even number of residues are also observed. Inactive on the non-sulfated agarose portion of the porphyran backbone. The chain is Beta-porphyranase B from Phocaeicola plebeius (strain DSM 17135 / JCM 12973 / CCUG 54634 / M2) (Bacteroides plebeius).